Reading from the N-terminus, the 143-residue chain is Beta/delta-urticatoxin-Uf2b (143 aa).

The first 18 residues, 1 to 18, serve as a signal peptide directing secretion; that stretch reads MGAIVLVALMALVASSSA. The propeptide occupies 19-80; the sequence is FSDIEHNIMK…MMLSGRPQPN (62 aa). Intrachain disulfides connect cysteine 83-cysteine 100, cysteine 90-cysteine 105, cysteine 99-cysteine 113, cysteine 115-cysteine 129, cysteine 122-cysteine 134, and cysteine 128-cysteine 142.

Belongs to the urticatoxin-2 family. In terms of tissue distribution, expressed in trichomes, that are stiff epidermal hairs located on the surface of petioles and leaves.

The protein resides in the secreted. Functionally, plant defense neurotoxin that causes pain and systemic symptoms in mammals via modulation of voltage-gated sodium channels (Nav). Potent modulator of human Nav1.5/SCN5A (EC(50)=55 nM), Nav1.6/SCN8A (EC(50)=0.86 nM), and Nav1.7/SCN9A (EC(50)=208 nM), where it shifts the activation threshold to more negative potentials and delays fast inactivation. Also shifts the voltage-dependence of steady-state fast inactivation of Nav1.6/SCN8A, but not that of Nav1.5/SCN5A or Nav1.7/SCN9A. On Nav1.7/SCN9A, principally acts by binding to extracellular loops of domain IV (Nav site 3). In vivo, intraplantar injection into mice causes numerous dose-dependent, immediate, and long-lasting spontaneous pain behaviors, while no swelling is observed in the injected paw. At the highest doses tested, systemic symptoms including hypokinesia and hypersalivation are observed. The sequence is that of Beta/delta-urticatoxin-Uf2b from Urtica ferox (Tree nettle).